Here is a 901-residue protein sequence, read N- to C-terminus: Flowering time control protein FPA (901 aa).

RRM domains lie at 18–90 (NNLW…YARP), 95–166 (KSLW…FLRS), and 206–281 (KVLW…YSND). Positions 343–416 (VGKEPNWRRP…SVDGFTPMGV (74 aa)) are disordered. The region spanning 441 to 537 (WRGMIAKGGT…DDGTTLFLVP (97 aa)) is the SPOC domain. Positions 655 to 736 (SQPAAPESHQ…YPPASNNPNY (82 aa)) are disordered. 2 stretches are compositionally biased toward polar residues: residues 664–682 (QPMS…SNGL) and 700–716 (HDAS…QYTP).

This sequence belongs to the RRM Spen family. In terms of tissue distribution, expressed in roots, leaves, stems and flowers. Highest expression in flower stems and meristematic regions.

The protein localises to the nucleus. Functionally, plays a role in the regulation of flowering time in the autonomous flowering pathway by decreasing FLOWERING LOCUS C mRNA levels. Required for RNA-mediated chromatin silencing of a range of loci in the genome. Cotranscriptionally recognizes aberrant RNA and marks it for silencing. Controls alternative cleavage and polyadenylation on pre-mRNAs and antisense RNAs. Acts redundantly with FCA to prevent the expression of distally polyadenylated antisense RNAs at the FLC locus. The polypeptide is Flowering time control protein FPA (FPA) (Arabidopsis thaliana (Mouse-ear cress)).